The following is a 474-amino-acid chain: Probable aspartate--tRNA ligase, cytoplasmic (474 aa).

Position 203 (Glu203) interacts with L-aspartate. The aspartate stretch occupies residues 225–228; sequence QLYK. Residue Arg247 coordinates L-aspartate. ATP is bound by residues 247–249, 255–257, and Glu397; these read RAE and RYL. Residues Ser400 and Arg404 each contribute to the L-aspartate site. 445–448 is a binding site for ATP; sequence GLER.

The protein belongs to the class-II aminoacyl-tRNA synthetase family. Type 2 subfamily. As to quaternary structure, homodimer.

It localises to the cytoplasm. It carries out the reaction tRNA(Asp) + L-aspartate + ATP = L-aspartyl-tRNA(Asp) + AMP + diphosphate. In Enterocytozoon bieneusi (strain H348) (Microsporidian parasite), this protein is Probable aspartate--tRNA ligase, cytoplasmic.